The primary structure comprises 483 residues: V-type proton ATPase subunit H (483 aa).

The residue at position 483 (serine 483) is a Phosphoserine.

This sequence belongs to the V-ATPase H subunit family. In terms of assembly, V-ATPase is a heteromultimeric enzyme made up of two complexes: the ATP-hydrolytic V1 complex and the proton translocation V0 complex. The V1 complex consists of three catalytic AB heterodimers that form a heterohexamer, three peripheral stalks each consisting of EG heterodimers, one central rotor including subunits D and F, and the regulatory subunits C and H. The proton translocation complex V0 consists of the proton transport subunit a, a ring of proteolipid subunits c9c'', rotary subunit d, subunits e and f, and the accessory subunits ATP6AP1/Ac45 and ATP6AP2/PRR. Interacts with AP2M1. Expressed in brain (at protein level).

It is found in the cytoplasmic vesicle. The protein resides in the clathrin-coated vesicle membrane. Functionally, subunit of the V1 complex of vacuolar(H+)-ATPase (V-ATPase), a multisubunit enzyme composed of a peripheral complex (V1) that hydrolyzes ATP and a membrane integral complex (V0) that translocates protons. V-ATPase is responsible for acidifying and maintaining the pH of intracellular compartments and in some cell types, is targeted to the plasma membrane, where it is responsible for acidifying the extracellular environment. Subunit H is essential for V-ATPase activity, but not for the assembly of the complex. Involved in the endocytosis mediated by clathrin-coated pits, required for the formation of endosomes. The sequence is that of V-type proton ATPase subunit H (ATP6V1H) from Bos taurus (Bovine).